Consider the following 306-residue polypeptide: Agmatinase (306 aa).

Mn(2+)-binding residues include His-126, Asp-149, His-151, Asp-153, Asp-230, and Asp-232.

Belongs to the arginase family. Agmatinase subfamily. It depends on Mn(2+) as a cofactor.

It carries out the reaction agmatine + H2O = urea + putrescine. It functions in the pathway amine and polyamine biosynthesis; putrescine biosynthesis via agmatine pathway; putrescine from agmatine: step 1/1. Functionally, catalyzes the formation of putrescine from agmatine. In Citrobacter koseri (strain ATCC BAA-895 / CDC 4225-83 / SGSC4696), this protein is Agmatinase.